The chain runs to 709 residues: Glycerol kinase (709 aa).

Residue threonine 56 coordinates substrate. Arginine 60 lines the ATP pocket. The interval 86-110 (KIGVSGLRRPSTAPARETPNAGDIK) is disordered. Arginine 201, tyrosine 258, and aspartate 386 together coordinate substrate. ATP contacts are provided by residues threonine 408, glycine 463, and 584–588 (GMSRS).

The protein belongs to the FGGY kinase family.

The enzyme catalyses glycerol + ATP = sn-glycerol 3-phosphate + ADP + H(+). The protein operates within polyol metabolism; glycerol degradation via glycerol kinase pathway; sn-glycerol 3-phosphate from glycerol: step 1/1. Its function is as follows. Key enzyme in the regulation of glycerol uptake and metabolism. Catalyzes the phosphorylation of glycerol to yield sn-glycerol 3-phosphate. This is Glycerol kinase (GUT1) from Saccharomyces cerevisiae (strain ATCC 204508 / S288c) (Baker's yeast).